Consider the following 359-residue polypeptide: Hereditary hemochromatosis protein homolog (359 aa).

A signal peptide spans 1–24; sequence MSLSAGLPVRPLLLLLLLLWSVAP. Positions 25 to 126 are alpha-1; the sequence is QALPPRSHSL…KVTKLGVVSE (102 aa). Residues 25-318 are Extracellular-facing; that stretch reads QALPPRSHSL…WEPLQSQAMI (294 aa). Residues asparagine 114, asparagine 142, asparagine 166, and asparagine 246 are each glycosylated (N-linked (GlcNAc...) asparagine). The interval 127 to 217 is alpha-2; sequence SHILQVVLGC…ELGRGVLGQQ (91 aa). 2 cysteine pairs are disulfide-bonded: cysteine 136–cysteine 199 and cysteine 237–cysteine 294. The tract at residues 218–309 is alpha-3; sequence VPTLVKVTRH…GLDQPLTASW (92 aa). One can recognise an Ig-like C1-type domain in the interval 219-308; it reads PTLVKVTRHW…PGLDQPLTAS (90 aa). The segment at 310–318 is connecting peptide; sequence EPLQSQAMI. The helical transmembrane segment at 319–339 threads the bilayer; that stretch reads IGIISGVTVCAIFLVGILFLI. The Cytoplasmic portion of the chain corresponds to 340–359; it reads LRKRKASGGTMGGYVLTDCE.

The protein belongs to the MHC class I family. In terms of assembly, binds TFR through the extracellular domain in a pH-dependent manner.

It is found in the cell membrane. In terms of biological role, binds to transferrin receptor (TFR) and reduces its affinity for iron-loaded transferrin. This chain is Hereditary hemochromatosis protein homolog (Hfe), found in Mus musculus (Mouse).